Reading from the N-terminus, the 655-residue chain is p-hydroxybenzoic acid efflux pump subunit AaeB (655 aa).

The next 10 membrane-spanning stretches (helical) occupy residues 13–33 (FAVKLASAIVLTLFVGFHFQL), 38–58 (WAVLTAAIVAAGPAFAAGGEP), 69–89 (LRIIGTFIGCIAGLVIIIAMI), 93–113 (LLMILVCCIWAGFCTWISSLV), 121–141 (WGLAGYTALIIVITIQPEPLL), 152–172 (EIVVGIVCAIVADLIFSPRSI), 370–390 (LFWLWTGWTSGSGAMVMIAVV), 407–427 (FIYGTLAALPLGLLYFLVIIP), 431–451 (QSMLLLCLSLAVLGFFLGIEV), and 481–501 (LFLDSALGQIVGCVLAFTVIL).

It belongs to the aromatic acid exporter ArAE (TC 2.A.85) family.

The protein localises to the cell inner membrane. Its function is as follows. Forms an efflux pump with AaeA. Could function as a metabolic relief valve, allowing to eliminate certain compounds when they accumulate to high levels in the cell. The protein is p-hydroxybenzoic acid efflux pump subunit AaeB of Escherichia fergusonii (strain ATCC 35469 / DSM 13698 / CCUG 18766 / IAM 14443 / JCM 21226 / LMG 7866 / NBRC 102419 / NCTC 12128 / CDC 0568-73).